A 161-amino-acid polypeptide reads, in one-letter code: Nucleotide-binding protein Pcar_0033 (161 aa).

This sequence belongs to the YajQ family.

In terms of biological role, nucleotide-binding protein. The chain is Nucleotide-binding protein Pcar_0033 from Syntrophotalea carbinolica (strain DSM 2380 / NBRC 103641 / GraBd1) (Pelobacter carbinolicus).